Consider the following 159-residue polypeptide: Ribosomal RNA large subunit methyltransferase H (159 aa).

S-adenosyl-L-methionine contacts are provided by residues Leu76, Gly108, and 127–132 (FGKLTL).

It belongs to the RNA methyltransferase RlmH family. In terms of assembly, homodimer.

Its subcellular location is the cytoplasm. It carries out the reaction pseudouridine(1915) in 23S rRNA + S-adenosyl-L-methionine = N(3)-methylpseudouridine(1915) in 23S rRNA + S-adenosyl-L-homocysteine + H(+). Specifically methylates the pseudouridine at position 1915 (m3Psi1915) in 23S rRNA. This is Ribosomal RNA large subunit methyltransferase H from Latilactobacillus sakei subsp. sakei (strain 23K) (Lactobacillus sakei subsp. sakei).